The chain runs to 230 residues: Small ribosomal subunit protein uS3 (230 aa).

The KH type-2 domain occupies 39-107; sequence VRNYLRQKLA…PIHVNIEEIR (69 aa). The segment at 210-230 is disordered; the sequence is SSKPEHESKQRKAGRRNAAAN.

It belongs to the universal ribosomal protein uS3 family. In terms of assembly, part of the 30S ribosomal subunit. Forms a tight complex with proteins S10 and S14.

Its function is as follows. Binds the lower part of the 30S subunit head. Binds mRNA in the 70S ribosome, positioning it for translation. In Neisseria gonorrhoeae (strain ATCC 700825 / FA 1090), this protein is Small ribosomal subunit protein uS3.